The chain runs to 309 residues: MSKAMNADNPEPATKSVAAIAPSLKAEILAEALPYIRKFHGKTIVVKYGGNAMTEEKLKHGFARDVILLKLVGMNPVVVHGGGPQIDEALKKVGKVGTFIQGMRVTDEETMEVVEWVLGGEVQQDIVMLINQYGGQAVGLTGKDGGLIRAKRLQMPDRENPGTFIDIGYVGDIEAINPAVVKALQDDAFIPVISPIGFSDDGQAYNINADVVAGKMAEILKAEKLVMMTNIPGVMDKKGNLLTDLSAREIEELFADGTISGGMLPKISSALDAAKSGVHSVHIIDGRIEHSLLLEILTEQAFGTMIRSH.

Substrate is bound by residues 82 to 83 (GG), Arg104, and Asn206.

The protein belongs to the acetylglutamate kinase family. ArgB subfamily.

It localises to the cytoplasm. The catalysed reaction is N-acetyl-L-glutamate + ATP = N-acetyl-L-glutamyl 5-phosphate + ADP. It functions in the pathway amino-acid biosynthesis; L-arginine biosynthesis; N(2)-acetyl-L-ornithine from L-glutamate: step 2/4. Functionally, catalyzes the ATP-dependent phosphorylation of N-acetyl-L-glutamate. This chain is Acetylglutamate kinase, found in Cupriavidus metallidurans (strain ATCC 43123 / DSM 2839 / NBRC 102507 / CH34) (Ralstonia metallidurans).